Consider the following 214-residue polypeptide: Phosphoenolpyruvate guanylyltransferase 2 (214 aa).

Positions 135, 150, and 153 each coordinate phosphoenolpyruvate.

The protein belongs to the CofC family.

The enzyme catalyses phosphoenolpyruvate + GTP + H(+) = enolpyruvoyl-2-diphospho-5'-guanosine + diphosphate. It functions in the pathway cofactor biosynthesis; coenzyme F420 biosynthesis. Its function is as follows. Guanylyltransferase that catalyzes the activation of phosphoenolpyruvate (PEP) as enolpyruvoyl-2-diphospho-5'-guanosine, via the condensation of PEP with GTP. It is involved in the biosynthesis of coenzyme F420, a hydride carrier cofactor. This is Phosphoenolpyruvate guanylyltransferase 2 from Rhodococcus jostii (strain RHA1).